A 2837-amino-acid chain; its full sequence is MVDSSYMYASGAFVPRVSYSRSIDLKDSLLDLVKVQKESYDSFTPKNKGNERLEVIFHTIFPINDPLRRATIEFISCRVDDPKYDESECIKRGVTFSAQVIASIRLVVMQDGISLDEYKSIKESGDHSKLATVVKSIEEQKVHFCGLPMMTDKGTFIINGVEKVIVSQMHRSPGVFFDSDKGKTYNSGKLIYSARIIPYRGSWLDIEFDVKDHLYFRVDRKRKLPISVLLKALGLSNNDILDRFYEKIKYVKHKDGWKVPFVPDKFKGVRLPFDLMDIEGNVLLKANVRITSRLAKKLYDNELKEYLVPFNSICGLFLAEDLMDSASSTKILSAGESIKLEDIKKLELLSVDEISVLNIDNLFVGPYILNTLFLDENMSYQDALYEIYRVLRPGEVPVLEIVEEFFRNLFFSPEYYDLSNIGRLKLNSYLGLNYDEDLTVLTHEDIIEIVKKIVLLRDGQGSVDDIDHLGNRRVRSVGEFIENQFRTGLLKLERAIVDSMSTSSLDKVSPSDFINPKVLTNVLRDFFNSSQLSQFMDQTNPLSEITHKRRLSALGPGGLTRERAGFEVRDVHPTHYGRICPIETPEGQNIGLINSLAIYARINKYGFIESPYRKVVNRVVTDQIEYLSAIDEGSHHIADTSVKLDENNCFVDDMLYCRYAGSFVMVSSDQVSYIDVSPKQVISVAASLIPFLENDDANRALMGSNMQRQAVPLLKPTAPLVATGMESFVASGSGAVVLAKRDGIVDSSDSNSIVIRAFDKERVNYLDVDIYHLRKFQRSNHNTCINQRPLVCVGDYVKKGDVIADGPAINSGELALGKNLLVAFMSWQGYNFEDSIIISSEVVKKDLFTSIHIEEFDCVVHDTPLGSEKITRAIPGVNEENLYHLDDSGIVKIGTRVGPGYILVGKVTPKPSLSLPPETKLLMTIFGEKSFDCADSSLYTSPDVEGTVIDVQVFTRRGVEENERALLIKQKEINDFEEERDYIINVTSEYFYDELKKLLINSGSQDREKFDSIEREQWWGIGLKNQSISEQVKSLKKDFDEKVSHAIAQFKRKVEKLHEGYDLPQGVSMSVKVFIAVKHSLQPGDKMAGRHGNKGVISRVVPVEDMPYLEDGTPVDIILNPLGVPSRMNVGQILETHVGWACRKLGEKVSNILDEINKIKSAFCKGIRSLNDDNFTQFAVAYLDNKKIENIDDDEITASVLNTPNKNALNDELNELVENYLNSCKSSYSNLRNFLIEVYSYGSNVSICNDIRNISDNNLIEFARKLRDGVPVAAPVFEGPKDEQIAKLFELAGLDNSGQAVLYDGCSGEKFDRKVTVGYMYMLKLHHLVDGKIHARSVGPYSLVTQQPLGGKSHFGGQRFGEMECWALQAYGAAYTLQEMLTVKSDDINGRVKIYESIIKGDSNFECGIPESFNVMIKELRSLCLNVDLKQNDVVIEDISHTNIAQPFNEVSISIASPESIKRISCGEIEDVLTANYRTFKVEKGGLFCPKVFGPVNDDECLCGKYKKRRHRGRICEKCGVEVTSSKVRRERMGHIELASPVAHIWFLKSLPSRIGALLDMSLRDIENILYSDNYIVIDPLVSPFEKGEIISEKAYNEAKDSYGIDSFVAMQGVEAIRELLTRLDLHEIRKDLRLELESVASEIRRKKIIKRLRIVENFIKSGNRPEWMILTTIPILPPDLRPLVSLESGRPAVSDLNHHYRTIINRNNRLRKLLSLNPPEIMIRNEKRMLQEAVDSLFDNSRRNTLVNKAGAVGYKKSISDMLKGKQGRFRQNLLGKRVDYSGRSVIVVGPTLKLNQCGLPKRMALELFKPFVYSKLKMYGMAPTIKFASKLIRAEKPEVWDMLEEVIKEHPVLLNRAPTLHRLGIQAFEPILIEGKAIQLHPLVCTAFNADFDGDQMAVHVPISLEAQLEARVLMMSTNNVLSPSNGRPIIVPSKDIVLGIYYLTLQEPKEDNLPSFGAFCEVEHSLSDGILHIHSSIKYRMEYINSSGETHYKTVCTTPGRLILWQIFPKHENLGFDLINQILTVKEITGIVDLVYRNCGQSATVAFSDKLMVLGFEYATFSGVSFGRCDMVIPETKATHVDHARGEIKKFSMQYQDGLITRSERYNKVIDEWSKCTDMIANDMLKAISIYDGNSKYNSVYMMVNSGARGSTSQMKQLAGMRGLMTKPSGEIIETPIISNFREGLNVFEYFNSTHGARKGLADTALKTANSGYLTRRLVDVSQNCIVAKHDCKTKNGLVVRATVEGSTIVASLESVVLGRTAANDIYNPVTKELLVKAGELIDEDKVKQISIAGLDVVKIRSPLTCEISPGVCSLCYGRDLATGKIVSIGEAVGVIAAQSVGEPGTQLTMRTFHIGGVMTRGVESSNIIASINAKIKLNNSNIIIDRNGNKIVISRSCEVVLIDSLGSEKLKHSVPYGAKLYVDESGSVKIGDKVAEWDPYTLPIITEKTGTVSYQDLKDGISITEVMDESTGISSKVVKDWKLHSGGANLRPRIVLLDDNGKVMTLASGVEACYFIPIGAVLNVQDGQKVHAGDVITRTPRESVKTRDITGGLPRVIELFEARRPKEHAIVSEIDGYVAFSEKDRRGKRSILIKPVDEQISPVEYLVSRSKHVIVNESDFVRKGDLLMDGDPDLHDILRVLGLEALAHYMISEIQQVYRLQGVRIDNKHLEVILKQMLQKVEITDPGDTMYLVGESIDKLEVDRENDAMSNSGKRPTHYLPILQGITRASLETSSFISAASFQETTKVLTEAAFCGKSDPLSGLKENVIVGRLIPAGTGLIMNKIRALSLCDNVDKYEKYFDIETYDEEWLMDNGCHLHSDEEESVVAYDQSN.

A DNA-directed RNA polymerase subunit beta region spans residues 1–1433; that stretch reads MVDSSYMYAS…CLNVDLKQND (1433 aa). The DNA-directed RNA polymerase subunit beta' stretch occupies residues 1436-2837; the sequence is IEDISHTNIA…ESVVAYDQSN (1402 aa). Cys-1501, Cys-1503, Cys-1516, and Cys-1519 together coordinate Zn(2+). Mg(2+) contacts are provided by Asp-1893, Asp-1895, and Asp-1897. Positions 2235, 2309, 2316, and 2319 each coordinate Zn(2+).

In the N-terminal section; belongs to the RNA polymerase beta chain family. It in the C-terminal section; belongs to the RNA polymerase beta' chain family. In terms of assembly, the RNAP catalytic core consists of 2 alpha, 1 beta/beta' and 1 omega subunit. When a sigma factor is associated with the core the holoenzyme is formed, which can initiate transcription. Mg(2+) is required as a cofactor. Zn(2+) serves as cofactor.

It catalyses the reaction RNA(n) + a ribonucleoside 5'-triphosphate = RNA(n+1) + diphosphate. Functionally, DNA-dependent RNA polymerase catalyzes the transcription of DNA into RNA using the four ribonucleoside triphosphates as substrates. The chain is Bifunctional DNA-directed RNA polymerase subunit beta-beta' (rpoBC) from Wolbachia pipientis wMel.